The primary structure comprises 240 residues: Pyridoxine 5'-phosphate synthase (240 aa).

Asparagine 7 is a binding site for 3-amino-2-oxopropyl phosphate. Position 9–10 (9–10 (DH)) interacts with 1-deoxy-D-xylulose 5-phosphate. Arginine 18 provides a ligand contact to 3-amino-2-oxopropyl phosphate. Histidine 43 functions as the Proton acceptor in the catalytic mechanism. Residues arginine 45 and histidine 50 each contribute to the 1-deoxy-D-xylulose 5-phosphate site. Glutamate 70 serves as the catalytic Proton acceptor. Threonine 100 contributes to the 1-deoxy-D-xylulose 5-phosphate binding site. The active-site Proton donor is histidine 191. 3-amino-2-oxopropyl phosphate contacts are provided by residues glycine 192 and 213 to 214 (GH).

This sequence belongs to the PNP synthase family. In terms of assembly, homooctamer; tetramer of dimers.

It is found in the cytoplasm. It catalyses the reaction 3-amino-2-oxopropyl phosphate + 1-deoxy-D-xylulose 5-phosphate = pyridoxine 5'-phosphate + phosphate + 2 H2O + H(+). The protein operates within cofactor biosynthesis; pyridoxine 5'-phosphate biosynthesis; pyridoxine 5'-phosphate from D-erythrose 4-phosphate: step 5/5. Functionally, catalyzes the complicated ring closure reaction between the two acyclic compounds 1-deoxy-D-xylulose-5-phosphate (DXP) and 3-amino-2-oxopropyl phosphate (1-amino-acetone-3-phosphate or AAP) to form pyridoxine 5'-phosphate (PNP) and inorganic phosphate. The protein is Pyridoxine 5'-phosphate synthase of Acaryochloris marina (strain MBIC 11017).